The sequence spans 212 residues: Octanoyltransferase (212 aa).

Positions 30-205 (ETTVDELWCL…ELVEGLGHSQ (176 aa)) constitute a BPL/LPL catalytic domain. Substrate is bound by residues 69-76 (RGGQVTYH), 136-138 (SLG), and 149-151 (GLA). Cys167 serves as the catalytic Acyl-thioester intermediate.

It belongs to the LipB family.

It is found in the cytoplasm. It carries out the reaction octanoyl-[ACP] + L-lysyl-[protein] = N(6)-octanoyl-L-lysyl-[protein] + holo-[ACP] + H(+). It participates in protein modification; protein lipoylation via endogenous pathway; protein N(6)-(lipoyl)lysine from octanoyl-[acyl-carrier-protein]: step 1/2. Catalyzes the transfer of endogenously produced octanoic acid from octanoyl-acyl-carrier-protein onto the lipoyl domains of lipoate-dependent enzymes. Lipoyl-ACP can also act as a substrate although octanoyl-ACP is likely to be the physiological substrate. This is Octanoyltransferase from Marinobacter nauticus (strain ATCC 700491 / DSM 11845 / VT8) (Marinobacter aquaeolei).